A 342-amino-acid chain; its full sequence is Delta-aminolevulinic acid dehydratase (342 aa).

Zn(2+)-binding residues include cysteine 133, cysteine 135, and cysteine 143. Lysine 210 functions as the Schiff-base intermediate with substrate in the catalytic mechanism. 5-aminolevulinate contacts are provided by arginine 220 and arginine 232. Position 254 is a phosphoserine (serine 254). Lysine 263 acts as the Schiff-base intermediate with substrate in catalysis. 5-aminolevulinate is bound by residues serine 290 and tyrosine 329.

It belongs to the ALAD family. Homooctamer. Zn(2+) is required as a cofactor.

The enzyme catalyses 2 5-aminolevulinate = porphobilinogen + 2 H2O + H(+). The protein operates within porphyrin-containing compound metabolism; protoporphyrin-IX biosynthesis; coproporphyrinogen-III from 5-aminolevulinate: step 1/4. Its activity is regulated as follows. Inhibited by divalent lead ions. Catalyzes an early step in the biosynthesis of tetrapyrroles. Binds two molecules of 5-aminolevulinate per subunit, each at a distinct site, and catalyzes their condensation to form porphobilinogen. This Saccharomyces cerevisiae (strain ATCC 204508 / S288c) (Baker's yeast) protein is Delta-aminolevulinic acid dehydratase (HEM2).